We begin with the raw amino-acid sequence, 369 residues long: Putative FAD-dependent oxidoreductase LodB (369 aa).

Residues 10–14 (GGGPA) and Arg103 each bind FAD.

It depends on FAD as a cofactor.

Its subcellular location is the cytoplasm. Functionally, is required for lysine-epsilon oxidase (LOD) activity in M.mediterranea. May be involved in the generation of the quinonic cofactor of LodA, leading to the active form of LodA containing a tyrosine-derived quinone cofactor. This is Putative FAD-dependent oxidoreductase LodB (lodB) from Marinomonas mediterranea (strain ATCC 700492 / JCM 21426 / NBRC 103028 / MMB-1).